The following is a 54-amino-acid chain: MDCVLRSYLLLAFGFLICLFLFCLVVFIWFVYKQILFRTTAQSNEARHNHSTVV.

The Lumenal portion of the chain corresponds to methionine 1–leucine 10. The helical transmembrane segment at leucine 11 to valine 31 threads the bilayer. Over tyrosine 32–valine 54 the chain is Cytoplasmic.

In terms of assembly, homodimer; disulfide-linked.

Its subcellular location is the host rough endoplasmic reticulum membrane. Transports viral genome to neighboring plant cells directly through plasmosdesmata, without any budding. The movement protein allows efficient cell to cell propagation, by bypassing the host cell wall barrier. Two movement proteins, p6, Hsp70h and three structural proteins, CP, CPm, and P64 are essential for cell-cell movement. Also plays a role in virion formation. Together with CPm and p64, encapsidates the 5'-terminal portion of the viral genome. The sequence is that of Movement protein p6 from Beet yellows virus (isolate Ukraine) (BYV).